A 389-amino-acid chain; its full sequence is Na(+)/H(+) antiporter NhaA 1 (389 aa).

11 helical membrane passes run 14-34 (AGGI…NSPL), 47-67 (FGMS…FLLI), 87-107 (IFPA…YVAF), 117-137 (GWAI…ALLG), 146-166 (VFLL…IALF), 171-191 (LSTL…MLNA), 197-217 (LIWY…SGVH), 252-272 (VAFA…LEGV), 280-300 (MLPL…IFTF), 321-341 (IFAV…ISSL), and 356-376 (LGIL…LHVS).

The protein belongs to the NhaA Na(+)/H(+) (TC 2.A.33) antiporter family.

The protein resides in the cell inner membrane. The catalysed reaction is Na(+)(in) + 2 H(+)(out) = Na(+)(out) + 2 H(+)(in). In terms of biological role, na(+)/H(+) antiporter that extrudes sodium in exchange for external protons. The protein is Na(+)/H(+) antiporter NhaA 1 of Vibrio vulnificus (strain CMCP6).